Reading from the N-terminus, the 368-residue chain is High affinity transport system protein p37 (368 aa).

The first 25 residues, 1–25 (MLFKKFTWVIPSLFLTIISTSLLIS), serve as a signal peptide directing secretion. Cys-26 is lipidated: N-palmitoyl cysteine. Residue Cys-26 is the site of S-diacylglycerol cysteine attachment.

The protein resides in the cell membrane. In terms of biological role, P37 is part of a high-affinity transport system. In Mycoplasma genitalium (strain ATCC 33530 / DSM 19775 / NCTC 10195 / G37) (Mycoplasmoides genitalium), this protein is High affinity transport system protein p37 (p37).